A 110-amino-acid chain; its full sequence is Ribonuclease P protein component 4 (110 aa).

Positions 65, 68, 94, and 97 each coordinate Zn(2+).

Belongs to the eukaryotic/archaeal RNase P protein component 4 family. In terms of assembly, consists of a catalytic RNA component and at least 4-5 protein subunits. Zn(2+) serves as cofactor.

It localises to the cytoplasm. The enzyme catalyses Endonucleolytic cleavage of RNA, removing 5'-extranucleotides from tRNA precursor.. In terms of biological role, part of ribonuclease P, a protein complex that generates mature tRNA molecules by cleaving their 5'-ends. In Methanococcus maripaludis (strain C5 / ATCC BAA-1333), this protein is Ribonuclease P protein component 4.